A 250-amino-acid polypeptide reads, in one-letter code: Triosephosphate isomerase (250 aa).

Substrate is bound at residue 9-11 (NWK). Histidine 96 (electrophile) is an active-site residue. Residue glutamate 166 is the Proton acceptor of the active site. Substrate is bound by residues glycine 172, serine 212, and 233 to 234 (GG).

This sequence belongs to the triosephosphate isomerase family. In terms of assembly, homodimer.

The protein localises to the cytoplasm. The catalysed reaction is D-glyceraldehyde 3-phosphate = dihydroxyacetone phosphate. The protein operates within carbohydrate biosynthesis; gluconeogenesis. It participates in carbohydrate degradation; glycolysis; D-glyceraldehyde 3-phosphate from glycerone phosphate: step 1/1. In terms of biological role, involved in the gluconeogenesis. Catalyzes stereospecifically the conversion of dihydroxyacetone phosphate (DHAP) to D-glyceraldehyde-3-phosphate (G3P). The sequence is that of Triosephosphate isomerase from Chlorobium luteolum (strain DSM 273 / BCRC 81028 / 2530) (Pelodictyon luteolum).